Consider the following 517-residue polypeptide: Maturase K (517 aa).

It belongs to the intron maturase 2 family. MatK subfamily.

It is found in the plastid. It localises to the chloroplast. Functionally, usually encoded in the trnK tRNA gene intron. Probably assists in splicing its own and other chloroplast group II introns. The protein is Maturase K of Veronica arvensis (Wall speedwell).